A 368-amino-acid polypeptide reads, in one-letter code: RNA polymerase sigma factor SigA (368 aa).

Positions 69-90 (LVNEKDSSDTDEKLNPSDLSAP) are disordered. A compositionally biased stretch (basic and acidic residues) spans 71-83 (NEKDSSDTDEKLN). Positions 135 to 205 (LAEANLRLVV…TRAIADQART (71 aa)) are sigma-70 factor domain-2. The short motif at 159–162 (DLIQ) is the Interaction with polymerase core subunit RpoC element. The sigma-70 factor domain-3 stretch occupies residues 214 to 290 (ETINKLIRVQ…DQEAQSPSDH (77 aa)). The segment at 303-356 (VLDTLTDREENVLRLRFGLDDGRTRTLEEVGKVFGVTRERIRQIEAKALRKLRH) is sigma-70 factor domain-4. The H-T-H motif DNA-binding region spans 329 to 348 (LEEVGKVFGVTRERIRQIEA).

It belongs to the sigma-70 factor family. RpoD/SigA subfamily. Interacts transiently with the RNA polymerase catalytic core.

It localises to the cytoplasm. Sigma factors are initiation factors that promote the attachment of RNA polymerase to specific initiation sites and are then released. This sigma factor is the primary sigma factor during exponential growth. The polypeptide is RNA polymerase sigma factor SigA (Staphylococcus aureus (strain N315)).